Consider the following 520-residue polypeptide: Keratin, type II cytoskeletal 72 (520 aa).

Positions 1-133 are head; that stretch reads MSRQLTLYPG…DPEIQKVRAQ (133 aa). The segment at 134–169 is coil 1A; it reads EREQIKALNNKFASFIDKVRFLEQQNQVLETKWELL. Positions 134 to 447 constitute an IF rod domain; it reads EREQIKALNN…KLLESEESRM (314 aa). Positions 170-188 are linker 1; that stretch reads QQLDQNNSRRSLEPVHESY. The coil 1B stretch occupies residues 189–280; sequence ISNLQKQLEI…VLFEGEIAQM (92 aa). The linker 12 stretch occupies residues 281 to 304; that stretch reads QSHISDTSVILSMDNNRQLDLDSI. Positions 305–443 are coil 2; that stretch reads LAEVRAQYEE…ATYRKLLESE (139 aa). The interval 444-520 is tail; that stretch reads ESRMAGEYPS…SSCVSKKASR (77 aa). The disordered stretch occupies residues 495 to 520; it reads GSCGSELKDPPAKTSASSCVSKKASR.

The protein belongs to the intermediate filament family. Heterotetramer of two type I and two type II keratins.

Has a role in hair formation. Specific component of keratin intermediate filaments in the inner root sheath (IRS) of the hair follicle. The chain is Keratin, type II cytoskeletal 72 (Krt72) from Rattus norvegicus (Rat).